A 170-amino-acid chain; its full sequence is NADH-quinone oxidoreductase subunit B (170 aa).

4 residues coordinate [4Fe-4S] cluster: Cys37, Cys38, Cys102, and Cys131.

Belongs to the complex I 20 kDa subunit family. As to quaternary structure, NDH-1 is composed of 14 different subunits. Subunits NuoB, C, D, E, F, and G constitute the peripheral sector of the complex. [4Fe-4S] cluster serves as cofactor.

The protein localises to the cell inner membrane. It catalyses the reaction a quinone + NADH + 5 H(+)(in) = a quinol + NAD(+) + 4 H(+)(out). NDH-1 shuttles electrons from NADH, via FMN and iron-sulfur (Fe-S) centers, to quinones in the respiratory chain. The immediate electron acceptor for the enzyme in this species is believed to be ubiquinone. Couples the redox reaction to proton translocation (for every two electrons transferred, four hydrogen ions are translocated across the cytoplasmic membrane), and thus conserves the redox energy in a proton gradient. The chain is NADH-quinone oxidoreductase subunit B from Geobacter sulfurreducens (strain ATCC 51573 / DSM 12127 / PCA).